The primary structure comprises 525 residues: Histidine-rich glycoprotein (525 aa).

The N-terminal stretch at 1-18 (MKALIAALLLITLQYSCA) is a signal peptide. Cystatin domains lie at 19–136 (VSPT…SALA) and 137–254 (NTKD…NING). Intrachain disulfides connect Cys-24–Cys-504, Cys-78–Cys-89, Cys-105–Cys-126, Cys-203–Cys-417, and Cys-218–Cys-241. Positions 41–84 (RRRDGYLFQLLRIADAHLDRVENTTVYYLVLDVQESDCSVLSRK) are interaction with ATP5F1A. Asn-63 carries an N-linked (GlcNAc...) asparagine glycan. N-linked (GlcNAc...) asparagine glycosylation is present at Asn-125. The interval 252–407 (INGVPPHLGH…GHHPHGHHPH (156 aa)) is disordered. Basic residues predominate over residues 284 to 293 (RDHHHPHKPH). Pro residues predominate over residues 310-320 (PPLPQGPPPLL). Polar residues predominate over residues 323 to 348 (SCSSCQHATFGTNGAQRHSHNNNSSD). N-linked (GlcNAc...) asparagine glycosylation is found at Asn-344 and Asn-345. A necessary for endothelial cell focal adhesions and anti-angiogenic activities region spans residues 348 to 382 (DLHPHKHHSHEQHPHGHHPHAHHPHEHDTHRQHPH). Basic residues-rich tracts occupy residues 351-371 (PHKHHSHEQHPHGHHPHAHHP) and 379-407 (QHPHGHHPHGHHPHGHHPHGHHPHGHHPH).

Interacts (via the HRR domain) with TPM1; the interaction appears to contribute to the antiangiogenic properties of the HRR domain. Interacts with THBS2; the interaction blocks the antiangiogenic effect of THBS2 with CD36. Interacts with THBS1 (via the TSP type I repeats); the interaction blocks the antiangiogenic effect of THBS1 with CD3. Interacts with PLG (via its Kringle domains); the interaction tethers PLG to the cell surface and enhances its activation. Interacts with HPSE; the interaction is enhanced at acidic pH, partially inhibits binding of HPSE to cell surface receptors and modulates its enzymatic activity. Interacts (via the HRR domain) with TMP1; the interaction partially mediates the antiangiogenic properties of HRG. Interacts with kappa and lambda light chains of IgG molecules. Interacts with ATP5F1A; the interaction occurs on the surface of T-cells and alters their cell morphology in concert with CONA. Binds IgG molecules containing kappa and lambda light chains and inhibits the formation of insoluble immunoglobulin complexes. Interacts with F12; the interaction, which is enhanced in the presence of zinc ions and inhibited by heparin-binding to HRG, inhibits factor XII autoactivation and contact-initiated coagulation. Zn(2+) serves as cofactor. Proteolytic cleavage produces several HRG fragments which are mostly disulfide-linked and, therefore, not released. Cleavage by plasmin is inhibited in the presence of heparin, zinc ions or in an acidic environment. Cleavage reduces binding of HRG to heparan sulfate, but enhances the ability of HRG to bind and tether plasminogen to the cell surface. On platelet activation, releases a 33 kDa antiangiogenic peptide which encompasses the HRR. Also cleaved in the C-terminal by plasmin. Post-translationally, N-glycosylated. As to expression, expressed in macrophages and in malignant cells. Expressed by the liver and secreted in plasma (at protein level).

The protein localises to the secreted. Plasma glycoprotein that binds a number of ligands such as heme, heparin, heparan sulfate, thrombospondin, plasminogen, and divalent metal ions. Binds heparin and heparin/glycosaminoglycans in a zinc-dependent manner. Binds heparan sulfate on the surface of liver, lung, kidney and heart endothelial cells. Binds to N-sulfated polysaccharide chains on the surface of liver endothelial cells. Inhibits rosette formation. Acts as an adapter protein and is implicated in regulating many processes such as immune complex and pathogen clearance, cell chemotaxis, cell adhesion, angiogenesis, coagulation and fibrinolysis. Mediates clearance of necrotic cells through enhancing the phagocytosis of necrotic cells in a heparan sulfate-dependent pathway. This process can be regulated by the presence of certain HRG ligands such as heparin and zinc ions. Binds to IgG subclasses of immunoglobins containing kappa and lambda light chains with different affinities regulating their clearance and inhibiting the formation of insoluble immune complexes. Tethers plasminogen to the cell surface. Binds T-cells and alters the cell morphology. Modulates angiogenesis by blocking the CD6-mediated antiangiongenic effect of thrombospondins, THBS1 and THBS2. Acts as a regulator of the vascular endothelial growth factor (VEGF) signaling pathway; inhibits endothelial cell motility by reducing VEGF-induced complex formation between PXN/paxillin and ILK/integrin-linked protein kinase and by promoting inhibition of VEGF-induced tyrosine phosphorylation of focal adhesion kinases and alpha-actinins in endothelial cells. Also plays a role in the regulation of tumor angiogenesis and tumor immune surveillance. Normalizes tumor vessels and promotes antitumor immunity by polarizing tumor-associated macrophages, leading to decreased tumor growth and metastasis. The chain is Histidine-rich glycoprotein (HRG) from Homo sapiens (Human).